The primary structure comprises 292 residues: Nanos homolog 1 (292 aa).

Disordered stretches follow at residues 1–41 (MEAF…QPFS) and 68–121 (GGNG…SRGR). The tract at residues 40 to 56 (FSSWNDYLGLATLITKA) is essential for its translational repressor activity. Low complexity predominate over residues 76–87 (PPSSSSSSCCSP). Over residues 104 to 115 (DYDEDDDDDSDE) the composition is skewed to acidic residues. A Nanos-type zinc finger spans residues 213-267 (VCVFCRNNKEAMALYTTHILKGPDGRVLCPVLRRYTCPLCGASGDNAHTIKYCPL). Zn(2+)-binding residues include Cys-214, Cys-217, His-230, Cys-241, Cys-249, Cys-252, His-260, and Cys-265. 2 short sequence motifs (C2HC) span residues 214 to 241 (CVFC…RVLC) and 249 to 265 (CPLC…IKYC). The interval 268–292 (SKVPPPPARPPPRSARDGPPGKKLR) is disordered. A compositionally biased stretch (pro residues) spans 269 to 280 (KVPPPPARPPPR). Residues 281–292 (SARDGPPGKKLR) are compositionally biased toward basic and acidic residues.

This sequence belongs to the nanos family. Interacts with PUM2, SNAPIN and CTNNB1. Interacts (via N-terminal region) with CTNND1. Interacts with DDX20 (via N-terminal region). As to expression, testis and ovary (at protein level). Predominantly expressed in testis. Specifically expressed during germline development. In adult tissues, it is mainly expressed in spermatogonia, the stem cells of the germline. Also expressed during meiosis in spermatocytes. Not present in late, post-meiotic stage germ cells. Expressed in fetal ovaries, while it is weakly or not expressed in mature postmeiotic oocytes, suggesting that it may be expressed in premeiotic female germ cells. Expressed at high levels only in the E-cadherin deficient cell lines. Highly expressed in lung carcinomas and mostly detected in invasive tumor cells and its expression correlates with tumor aggressiveness.

It localises to the cytoplasm. Its subcellular location is the perinuclear region. In terms of biological role, may act as a translational repressor which regulates translation of specific mRNAs by forming a complex with PUM2 that associates with the 3'-UTR of mRNA targets. Capable of interfering with the proadhesive and anti-invasive functions of E-cadherin. Up-regulates the production of MMP14 to promote tumor cell invasion. The chain is Nanos homolog 1 (NANOS1) from Homo sapiens (Human).